A 979-amino-acid polypeptide reads, in one-letter code: SGGFDFSFLPQPPQEKHDGGRYYLGPGPMGLMGPRGPPGASGAPGPQGFQGPAGEPGEPGQTGPAGARGPAGPPGKAGGVVGPQGARGFPGTPGLPGFKGIRGHNGLDGLKGQPGAPGVKGEPGAPGENGTPGQTGARGLPGERGRVGAPGPAGARGSDGSVGPVGPAGPIGSAGPPGFPGAPGPKGELGPVGSTGPSGPAGPRGEQGLPGVSGPVGPPGNPGANGLTGAKGAAGLPGVAGAPGLPGPRARGLVGEPGPAGSKGESGGEPGSAGPQGPPGSSGEEGKRGPSGESGSTGPTGPPGLRGGPGSRAGVIGPAGARGASGPAGVRGRPGEPGLMGARGLPGSPGNVGPAGKEGPVGLPGIDGRPGPIGPAGARGEAGNIGFPGPKGPAGDPGKAGEKGAGNRGAPGPDGNNGAQGPPGLQGVQGGKGEQGPAGPPGFQGLPGPAGTTGEAGKPGERGIPGEFGLPGPAGPRGERGPPGESGAVGPSGAIGSRGPSGPPGPDGNKGEPGVVGAPGGSGGLPGERGAAGIPGGKGEKGETGLRGEVGTTGRDGARGAPGAVGAPGPAGATGDRGEAGAAGPAGPAGPRGSPGERGEVGPAGPNGFAGPAGAAGQPGAKGERGTKGPKGENGIVGPTGPVGSAGPAGPNGPAGPAGSRGDGGPPGATGFPGAAGRTGPPGPSGITGPPGPPGAAGKEGLRGPRGDQGPVGRGETGAGGPPGFTGEKGPSGEPGTAGPPGTAGPQGLLGAPGILGLPGSRGERGLPGVAGAVGEPGPLGIGPPGARGGRDGNPGSDGPPGRDGLPGHKGYAGNGPVGAAGAPGPHGVGPAGKHGNRGEPGPVGSVGPVGALGPRGPSGPQGIRGDKGEPGDKGPRGLPGLKGHNGLQGLPGLAGHHGDQGAPGPVGPAGPRGPAGPSGPAGKDGRTGHPGAVGPAGIRGSQGSQGPSGPPGPPGPPGPPGASGGGYDFGYEGDFYRA.

The segment at 1–979 (SGGFDFSFLP…FGYEGDFYRA (979 aa)) is disordered. Residues proline 10, proline 13, proline 38, and proline 44 each carry the 4-hydroxyproline modification. The segment covering 24–70 (LGPGPMGLMGPRGPPGASGAPGPQGFQGPAGEPGEPGQTGPAGARGP) has biased composition (low complexity). Lysine 99 bears the 5-hydroxylysine; alternate mark. O-linked (Gal...) hydroxylysine; alternate glycosylation occurs at lysine 99. Composition is skewed to low complexity over residues 147–176 (VGAP…SAGP), 222–263 (PGAN…AGSK), 272–282 (SAGPQGPPGSS), and 312–331 (RAGV…AGVR). 4-hydroxyproline is present on residues proline 334 and proline 337. Residues 363–382 (LPGIDGRPGPIGPAGARGEA) show a composition bias toward low complexity. The segment covering 427-436 (GVQGGKGEQG) has biased composition (gly residues). Over residues 483 to 500 (PGESGAVGPSGAIGSRGP) the composition is skewed to low complexity. Positions 517–527 (GAPGGSGGLPG) are enriched in gly residues. 2 stretches are compositionally biased toward low complexity: residues 550 to 594 (VGTT…PRGS) and 601 to 621 (VGPA…QPGA). Basic and acidic residues predominate over residues 622-631 (KGERGTKGPK). Low complexity predominate over residues 639-649 (PTGPVGSAGPA). Positions 659–668 (GSRGDGGPPG) are enriched in gly residues. Residues 669–679 (ATGFPGAAGRT) show a composition bias toward low complexity. The segment covering 710-724 (GPVGRGETGAGGPPG) has biased composition (gly residues). Composition is skewed to low complexity over residues 725–759 (FTGE…LGLP) and 767–777 (LPGVAGAVGEP). Gly residues predominate over residues 778–788 (GPLGIGPPGAR). Residues 840–855 (EPGPVGSVGPVGALGP) show a composition bias toward low complexity. Over residues 865–876 (RGDKGEPGDKGP) the composition is skewed to basic and acidic residues. Residues 949–961 (SGPPGPPGPPGPP) show a composition bias toward pro residues.

The protein belongs to the fibrillar collagen family. As to quaternary structure, trimers of one alpha 2(I) and two alpha 1(I) chains. Interacts (via C-terminus) with TMEM131 (via PapD-L domain); the interaction is direct and is involved in assembly and TRAPPIII ER-to-Golgi transport complex-dependent secretion of collagen. Post-translationally, prolines at the third position of the tripeptide repeating unit (G-X-Y) are hydroxylated in some or all of the chains. As to expression, expressed in bones.

Its subcellular location is the secreted. The protein localises to the extracellular space. It is found in the extracellular matrix. Its function is as follows. Type I collagen is a member of group I collagen (fibrillar forming collagen). The sequence is that of Collagen alpha-2(I) chain from Bradypus variegatus (Brown-throated three-fingered sloth).